The chain runs to 442 residues: Exodeoxyribonuclease 7 large subunit (442 aa).

Belongs to the XseA family. In terms of assembly, heterooligomer composed of large and small subunits.

It is found in the cytoplasm. It catalyses the reaction Exonucleolytic cleavage in either 5'- to 3'- or 3'- to 5'-direction to yield nucleoside 5'-phosphates.. Functionally, bidirectionally degrades single-stranded DNA into large acid-insoluble oligonucleotides, which are then degraded further into small acid-soluble oligonucleotides. In Shewanella sediminis (strain HAW-EB3), this protein is Exodeoxyribonuclease 7 large subunit.